We begin with the raw amino-acid sequence, 49 residues long: Metallothionein (49 aa).

The beta stretch occupies residues 1–16 (SCAGSCKCKNCRCRSC). 17 residues coordinate a divalent metal cation: C2, C6, C8, C11, C13, C16, C20, C21, C23, C24, C28, C31, C35, C37, C45, C47, and C48. Residues 17–49 (RKSCCSCCPAGCNNCAKGCVCKEPASSKCSCCH) are alpha.

It belongs to the metallothionein superfamily. Type 1 family.

Metallothioneins have a high content of cysteine residues that bind various heavy metals. The polypeptide is Metallothionein (Phasianus colchicus colchicus (Black-necked pheasant)).